A 121-amino-acid chain; its full sequence is UPF0102 protein XF_0554 (121 aa).

Belongs to the UPF0102 family.

The protein is UPF0102 protein XF_0554 of Xylella fastidiosa (strain 9a5c).